Reading from the N-terminus, the 290-residue chain is Iron-sulfur cluster carrier protein (290 aa).

47-54 (GKGGVGKS) provides a ligand contact to ATP.

The protein belongs to the Mrp/NBP35 ATP-binding proteins family. Homodimer.

In terms of biological role, binds and transfers iron-sulfur (Fe-S) clusters to target apoproteins. Can hydrolyze ATP. This chain is Iron-sulfur cluster carrier protein, found in Methanocaldococcus jannaschii (strain ATCC 43067 / DSM 2661 / JAL-1 / JCM 10045 / NBRC 100440) (Methanococcus jannaschii).